Reading from the N-terminus, the 239-residue chain is 1-(5-phosphoribosyl)-5-[(5-phosphoribosylamino)methylideneamino] imidazole-4-carboxamide isomerase (239 aa).

The active-site Proton acceptor is the aspartate 12. The active-site Proton donor is the aspartate 133.

This sequence belongs to the HisA/HisF family.

Its subcellular location is the cytoplasm. It catalyses the reaction 1-(5-phospho-beta-D-ribosyl)-5-[(5-phospho-beta-D-ribosylamino)methylideneamino]imidazole-4-carboxamide = 5-[(5-phospho-1-deoxy-D-ribulos-1-ylimino)methylamino]-1-(5-phospho-beta-D-ribosyl)imidazole-4-carboxamide. The protein operates within amino-acid biosynthesis; L-histidine biosynthesis; L-histidine from 5-phospho-alpha-D-ribose 1-diphosphate: step 4/9. The chain is 1-(5-phosphoribosyl)-5-[(5-phosphoribosylamino)methylideneamino] imidazole-4-carboxamide isomerase from Sulfurihydrogenibium sp. (strain YO3AOP1).